Consider the following 182-residue polypeptide: Large ribosomal subunit protein uL5 (182 aa).

It belongs to the universal ribosomal protein uL5 family. In terms of assembly, part of the 50S ribosomal subunit; part of the 5S rRNA/L5/L18/L25 subcomplex. Contacts the 5S rRNA and the P site tRNA. Forms a bridge to the 30S subunit in the 70S ribosome.

This is one of the proteins that bind and probably mediate the attachment of the 5S RNA into the large ribosomal subunit, where it forms part of the central protuberance. In the 70S ribosome it contacts protein S13 of the 30S subunit (bridge B1b), connecting the 2 subunits; this bridge is implicated in subunit movement. Contacts the P site tRNA; the 5S rRNA and some of its associated proteins might help stabilize positioning of ribosome-bound tRNAs. The polypeptide is Large ribosomal subunit protein uL5 (Leptospira interrogans serogroup Icterohaemorrhagiae serovar copenhageni (strain Fiocruz L1-130)).